Here is a 186-residue protein sequence, read N- to C-terminus: Dihydrofolate reductase (186 aa).

The 179-residue stretch at Arg2–Val180 folds into the DHFR domain. Residues Ala8 and Gly14–Gly20 contribute to the NADP(+) site. Asp28–Lys33 provides a ligand contact to substrate. Arg51 to Thr53 is a binding site for NADP(+). Position 67 (Arg67) interacts with substrate. NADP(+) contacts are provided by residues Ser73–Thr75 and Gly112–Glu119.

It belongs to the dihydrofolate reductase family. Monomer.

The enzyme catalyses (6S)-5,6,7,8-tetrahydrofolate + NADP(+) = 7,8-dihydrofolate + NADPH + H(+). Its pathway is cofactor biosynthesis; tetrahydrofolate biosynthesis; 5,6,7,8-tetrahydrofolate from 7,8-dihydrofolate: step 1/1. Functionally, key enzyme in folate metabolism. Contributes to the de novo mitochondrial thymidylate biosynthesis pathway. Catalyzes an essential reaction for de novo glycine and purine synthesis, and for DNA precursor synthesis. The sequence is that of Dihydrofolate reductase from Schistosoma mansoni (Blood fluke).